The sequence spans 124 residues: S-adenosylmethionine decarboxylase proenzyme (124 aa).

Ser63 acts as the Schiff-base intermediate with substrate; via pyruvic acid in catalysis. At Ser63 the chain carries Pyruvic acid (Ser); by autocatalysis. The active-site Proton acceptor; for processing activity is the His68. Cys83 functions as the Proton donor; for catalytic activity in the catalytic mechanism.

The protein belongs to the prokaryotic AdoMetDC family. Type 1 subfamily. Heterotetramer of two alpha and two beta chains arranged as a dimer of alpha/beta heterodimers. It depends on pyruvate as a cofactor. Is synthesized initially as an inactive proenzyme. Formation of the active enzyme involves a self-maturation process in which the active site pyruvoyl group is generated from an internal serine residue via an autocatalytic post-translational modification. Two non-identical subunits are generated from the proenzyme in this reaction, and the pyruvate is formed at the N-terminus of the alpha chain, which is derived from the carboxyl end of the proenzyme. The post-translation cleavage follows an unusual pathway, termed non-hydrolytic serinolysis, in which the side chain hydroxyl group of the serine supplies its oxygen atom to form the C-terminus of the beta chain, while the remainder of the serine residue undergoes an oxidative deamination to produce ammonia and the pyruvoyl group blocking the N-terminus of the alpha chain.

It catalyses the reaction S-adenosyl-L-methionine + H(+) = S-adenosyl 3-(methylsulfanyl)propylamine + CO2. The protein operates within amine and polyamine biosynthesis; S-adenosylmethioninamine biosynthesis; S-adenosylmethioninamine from S-adenosyl-L-methionine: step 1/1. Functionally, catalyzes the decarboxylation of S-adenosylmethionine to S-adenosylmethioninamine (dcAdoMet), the propylamine donor required for the synthesis of the polyamines spermine and spermidine from the diamine putrescine. This chain is S-adenosylmethionine decarboxylase proenzyme, found in Thermoanaerobacter pseudethanolicus (strain ATCC 33223 / 39E) (Clostridium thermohydrosulfuricum).